The primary structure comprises 296 residues: GTPase Era (296 aa).

The Era-type G domain maps to Lys3–Glu170. The tract at residues Gly11–Ser18 is G1. Gly11 to Ser18 lines the GTP pocket. Residues Gln37–Asn41 are G2. The tract at residues Asp58–Gly61 is G3. Residues Asp58 to Ile62 and Asn120 to Asp123 contribute to the GTP site. Residues Asn120–Asp123 form a G4 region. Residues Ile149–Ala151 are G5. In terms of domain architecture, KH type-2 spans Leu201–Glu278.

The protein belongs to the TRAFAC class TrmE-Era-EngA-EngB-Septin-like GTPase superfamily. Era GTPase family. Monomer.

It is found in the cytoplasm. Its subcellular location is the cell membrane. In terms of biological role, an essential GTPase that binds both GDP and GTP, with rapid nucleotide exchange. Plays a role in 16S rRNA processing and 30S ribosomal subunit biogenesis and possibly also in cell cycle regulation and energy metabolism. The chain is GTPase Era from Clostridium botulinum (strain ATCC 19397 / Type A).